The following is a 106-amino-acid chain: UPF0145 protein Cthe_0398 (106 aa).

The protein belongs to the UPF0145 family.

The protein is UPF0145 protein Cthe_0398 of Acetivibrio thermocellus (strain ATCC 27405 / DSM 1237 / JCM 9322 / NBRC 103400 / NCIMB 10682 / NRRL B-4536 / VPI 7372) (Clostridium thermocellum).